Reading from the N-terminus, the 345-residue chain is Erythronate-4-phosphate dehydrogenase (345 aa).

Residue Ser45 participates in substrate binding. NAD(+)-binding residues include Asp146 and Thr174. Residue Arg207 is part of the active site. Asp227 lines the NAD(+) pocket. The active site involves Glu232. The active-site Proton donor is His249. Gly252 serves as a coordination point for NAD(+).

The protein belongs to the D-isomer specific 2-hydroxyacid dehydrogenase family. PdxB subfamily. Homodimer.

Its subcellular location is the cytoplasm. The enzyme catalyses 4-phospho-D-erythronate + NAD(+) = (R)-3-hydroxy-2-oxo-4-phosphooxybutanoate + NADH + H(+). It functions in the pathway cofactor biosynthesis; pyridoxine 5'-phosphate biosynthesis; pyridoxine 5'-phosphate from D-erythrose 4-phosphate: step 2/5. Catalyzes the oxidation of erythronate-4-phosphate to 3-hydroxy-2-oxo-4-phosphonooxybutanoate. This chain is Erythronate-4-phosphate dehydrogenase, found in Ruthia magnifica subsp. Calyptogena magnifica.